A 225-amino-acid polypeptide reads, in one-letter code: O-methyltransferase rstn1 (225 aa).

S-adenosyl-L-methionine is bound by residues glutamine 97 and histidine 142.

This sequence belongs to the methyltransferase superfamily.

It catalyses the reaction desmethylrestrictinol + S-adenosyl-L-methionine = restrictinol + S-adenosyl-L-homocysteine + H(+). It participates in antifungal biosynthesis. In terms of biological role, O-methyltransferase; part of the gene cluster that mediates the biosynthesis of the tetrahydropyranyl antifungal agent restricticin that acts as an inhibitor of CYP51 and blocks the ergosterol biosynthesis. Within the pathway, rstn1 uses S-adenosylmethionine to methylate position C4 of desmethylrestrictinol to produce restrictinol. The highly reducing polyketide synthase rstn3, the short chain dehydrogenase rstn4, the cyclase rstn5, the FAD-dependent monooxygenase rstn6 and the enoylreductase rstn7 are required to generate the first stable intermediate desmethylrestrictinol. Rstn3 with rstn7 biosynthesize the first polyketide chain intermediate that is reduced by rstn4, followed by epoxidation by rstn6 before 6-endo cyclization via epoxide opening by rstn5 leads to desmethylrestrictinol. The methyltransferase rstn1 then catalyzes the C4 O-methylation of desmethylrestrictinol to produce restrictinol, and the nonribosomal peptide synthetase rstn8 catalyzes the C3 esterification of restrictinol with glycine that leads to restricticin. The protein is O-methyltransferase rstn1 of Aspergillus nomiae NRRL (strain ATCC 15546 / NRRL 13137 / CBS 260.88 / M93).